The chain runs to 136 residues: NADPH-dependent 7-cyano-7-deazaguanine reductase (136 aa).

The active-site Thioimide intermediate is cysteine 53. Aspartate 60 functions as the Proton donor in the catalytic mechanism. Substrate is bound by residues 75–77 and 94–95; these read VEL and HE.

The protein belongs to the GTP cyclohydrolase I family. QueF type 1 subfamily.

The protein resides in the cytoplasm. It carries out the reaction 7-aminomethyl-7-carbaguanine + 2 NADP(+) = 7-cyano-7-deazaguanine + 2 NADPH + 3 H(+). The protein operates within tRNA modification; tRNA-queuosine biosynthesis. Catalyzes the NADPH-dependent reduction of 7-cyano-7-deazaguanine (preQ0) to 7-aminomethyl-7-deazaguanine (preQ1). This is NADPH-dependent 7-cyano-7-deazaguanine reductase from Trichormus variabilis (strain ATCC 29413 / PCC 7937) (Anabaena variabilis).